Here is a 386-residue protein sequence, read N- to C-terminus: Na(+)/H(+) antiporter NhaA (386 aa).

11 consecutive transmembrane segments (helical) span residues 11-31, 60-80, 96-116, 126-146, 155-175, 180-200, 218-238, 260-280, 293-313, 326-346, and 358-378; these read NDAT…FLAN, LLLW…GLEV, MFPL…YAAF, GWAI…ALLG, MFLM…IALF, LSLI…VLNG, VAVL…GLFI, VSWL…LSGV, ITLG…WLAV, LIDI…SIFI, and LVTL…LVGY.

It belongs to the NhaA Na(+)/H(+) (TC 2.A.33) antiporter family.

It localises to the cell inner membrane. The enzyme catalyses Na(+)(in) + 2 H(+)(out) = Na(+)(out) + 2 H(+)(in). Functionally, na(+)/H(+) antiporter that extrudes sodium in exchange for external protons. The chain is Na(+)/H(+) antiporter NhaA from Erwinia tasmaniensis (strain DSM 17950 / CFBP 7177 / CIP 109463 / NCPPB 4357 / Et1/99).